Consider the following 276-residue polypeptide: Large ribosomal subunit protein uL2 (276 aa).

The disordered stretch occupies residues 224 to 258 (VAMNPVDHPHGGGEGRTGEGRVPVSPWGTPTKGYR). Over residues 230–242 (DHPHGGGEGRTGE) the composition is skewed to basic and acidic residues.

Belongs to the universal ribosomal protein uL2 family. Part of the 50S ribosomal subunit. Forms a bridge to the 30S subunit in the 70S ribosome.

One of the primary rRNA binding proteins. Required for association of the 30S and 50S subunits to form the 70S ribosome, for tRNA binding and peptide bond formation. It has been suggested to have peptidyltransferase activity; this is somewhat controversial. Makes several contacts with the 16S rRNA in the 70S ribosome. The chain is Large ribosomal subunit protein uL2 from Polynucleobacter necessarius subsp. necessarius (strain STIR1).